We begin with the raw amino-acid sequence, 173 residues long: Protein SHI RELATED SEQUENCE 8 (173 aa).

Zn(2+)-binding residues include Cys52, Cys63, Cys68, Cys72, and Cys79. Residues 52-79 (CQDFGNQAKKDCSHMRCRTCCKSRGFEC) constitute a DNA-binding region (zn(2)-C6 fungal-type; degenerate). Positions 100–110 (LATVQPQTQLP) are enriched in low complexity. The interval 100-121 (LATVQPQTQLPRGESVPKRHRE) is disordered.

This sequence belongs to the SHI protein family.

Its subcellular location is the nucleus. Its function is as follows. Transcription activator that binds DNA on 5'-ACTCTAC-3' and promotes auxin homeostasis-regulating gene expression (e.g. YUC genes), as well as genes affecting stamen development, cell expansion and timing of flowering. Synergistically with other SHI-related proteins, regulates gynoecium, stamen and leaf development in a dose-dependent manner, controlling apical-basal patterning. Promotes style and stigma formation, and influence vascular development during gynoecium development. May also have a role in the formation and/or maintenance of the shoot apical meristem (SAM). This chain is Protein SHI RELATED SEQUENCE 8 (SRS8), found in Arabidopsis thaliana (Mouse-ear cress).